Here is a 125-residue protein sequence, read N- to C-terminus: Protein ELF4-LIKE 1 (125 aa).

A compositionally biased stretch (polar residues) spans 1–18 (MEASRNRSLVGNNRSPEM). A disordered region spans residues 1-28 (MEASRNRSLVGNNRSPEMNENDGEDVAA).

This sequence belongs to the EARLY FLOWERING 4 family. In terms of assembly, homodimer.

Its subcellular location is the nucleus. In terms of biological role, component of the central CCA1/LHY-TOC1 feedback loop in the circadian clock that promotes clock accuracy and is required for sustained rhythms in the absence of daily light/dark cycles. The protein is Protein ELF4-LIKE 1 (EFL1) of Arabidopsis thaliana (Mouse-ear cress).